A 140-amino-acid polypeptide reads, in one-letter code: Nucleoside diphosphate kinase (140 aa).

ATP is bound by residues lysine 9, phenylalanine 57, arginine 85, threonine 91, arginine 102, and asparagine 112. Histidine 115 functions as the Pros-phosphohistidine intermediate in the catalytic mechanism.

It belongs to the NDK family. In terms of assembly, homotetramer. Mg(2+) serves as cofactor.

The protein resides in the cytoplasm. The catalysed reaction is a 2'-deoxyribonucleoside 5'-diphosphate + ATP = a 2'-deoxyribonucleoside 5'-triphosphate + ADP. It carries out the reaction a ribonucleoside 5'-diphosphate + ATP = a ribonucleoside 5'-triphosphate + ADP. Major role in the synthesis of nucleoside triphosphates other than ATP. The ATP gamma phosphate is transferred to the NDP beta phosphate via a ping-pong mechanism, using a phosphorylated active-site intermediate. In Chlorobium luteolum (strain DSM 273 / BCRC 81028 / 2530) (Pelodictyon luteolum), this protein is Nucleoside diphosphate kinase.